The chain runs to 88 residues: MYKQIVHAIGKAIQTLLLGLIKSYRYLISPVLMSSCRFYPSCSCYAETALKRFGVIKGSGLTVWRLLRCHPFHPGGVDFVPEKSNEMV.

Belongs to the UPF0161 family.

The protein localises to the cell inner membrane. Functionally, could be involved in insertion of integral membrane proteins into the membrane. The chain is Putative membrane protein insertion efficiency factor from Coxiella burnetii (strain Dugway 5J108-111).